Here is a 116-residue protein sequence, read N- to C-terminus: Transmembrane protein 213 (116 aa).

An N-terminal signal peptide occupies residues 1–35; that stretch reads MAQSGVFLRNPGHLTSAPQAALLFSLVLTSFHLSC. Residues 36–79 lie on the Extracellular side of the membrane; that stretch reads GTETSSSNSTLSAHHPDPGTLEQCANVDFCPLASLCCRASVDEY. Residues 80–100 form a helical membrane-spanning segment; that stretch reads GWIAAAVGWSFWFLTLILLCV. At 101-116 the chain is on the cytoplasmic side; it reads DKLMKLTPEEPKDLAA.

It is found in the membrane. This Mus musculus (Mouse) protein is Transmembrane protein 213 (Tmem213).